An 84-amino-acid chain; its full sequence is Sporulation-specific transcription factor SpoVIF (84 aa).

Its subcellular location is the cytoplasm. Functionally, transcription factor involved in spore coat assembly and spore resistance. Required for gene regulation during the latter stages of sporulation. Regulates the transcription of at least cgeA, cotG and cotS. May directly or indirectly control the function of the GerE protein. This Bacillus subtilis (strain 168) protein is Sporulation-specific transcription factor SpoVIF.